A 480-amino-acid polypeptide reads, in one-letter code: UDP-N-acetylmuramate--L-alanine ligase (480 aa).

127–133 (GTHGKTT) is a binding site for ATP.

It belongs to the MurCDEF family.

The protein resides in the cytoplasm. The enzyme catalyses UDP-N-acetyl-alpha-D-muramate + L-alanine + ATP = UDP-N-acetyl-alpha-D-muramoyl-L-alanine + ADP + phosphate + H(+). Its pathway is cell wall biogenesis; peptidoglycan biosynthesis. Cell wall formation. The protein is UDP-N-acetylmuramate--L-alanine ligase of Blochmanniella floridana.